The sequence spans 1456 residues: Alpha-2-macroglobulin-like protein 1 (1456 aa).

The first 19 residues, methionine 1–alanine 19, serve as a signal peptide directing secretion. Residues asparagine 48, asparagine 172, and asparagine 868 are each glycosylated (N-linked (GlcNAc...) asparagine).

The protein belongs to the protease inhibitor I39 (alpha-2-macroglobulin) family. In terms of assembly, homotetramer; consists of two dimer pairs that are disulfide-linked. Part of a complex composed of complement component C3, CLCA1/CLCA3, A2ML1/OH and ALB/serum albumin.

The protein localises to the secreted. Functionally, inhibits protease gelatinolytic complex activity against type 1 collagen. The protein is Alpha-2-macroglobulin-like protein 1 of Mus musculus (Mouse).